Reading from the N-terminus, the 72-residue chain is UPF0154 protein BPUM_1692 (72 aa).

The helical transmembrane segment at 4-24 threads the bilayer; it reads WVVILVGVVALLAGVALGFFI.

The protein belongs to the UPF0154 family.

The protein resides in the cell membrane. This Bacillus pumilus (strain SAFR-032) protein is UPF0154 protein BPUM_1692.